The following is a 285-amino-acid chain: SLAM family member 8 (285 aa).

The signal sequence occupies residues 1 to 22 (MVMRPLWSLLLWEALLPITVTG). At 23–233 (AQVLSKVGGS…AAPGKASYKD (211 aa)) the chain is on the extracellular side. Residue Asn-85 is glycosylated (N-linked (GlcNAc...) asparagine). The 88-residue stretch at 128-215 (PVVQVFIAVE…PVSWDLATVT (88 aa)) folds into the Ig-like C2-type domain. Cys-152 and Cys-201 form a disulfide bridge. Residues 234-254 (VLLVVVPVSLLLMLVTLFSAW) traverse the membrane as a helical segment. Residues 255–285 (HWCPCSGKKKKDVHADRVGPETENPLVQDLP) are Cytoplasmic-facing. Residues 262–285 (KKKKDVHADRVGPETENPLVQDLP) are disordered.

Expressed in lymph node, spleen, thymus and bone marrow.

It is found in the membrane. In terms of biological role, may play a role in B-lineage commitment and/or modulation of signaling through the B-cell receptor. This Homo sapiens (Human) protein is SLAM family member 8 (SLAMF8).